Reading from the N-terminus, the 425-residue chain is Tol-Pal system protein TolB (425 aa).

Residues 1–25 (MTRKHILSFALMTALGMTVTSTAFA) form the signal peptide.

This sequence belongs to the TolB family. In terms of assembly, the Tol-Pal system is composed of five core proteins: the inner membrane proteins TolA, TolQ and TolR, the periplasmic protein TolB and the outer membrane protein Pal. They form a network linking the inner and outer membranes and the peptidoglycan layer.

The protein resides in the periplasm. Functionally, part of the Tol-Pal system, which plays a role in outer membrane invagination during cell division and is important for maintaining outer membrane integrity. The chain is Tol-Pal system protein TolB from Acinetobacter baylyi (strain ATCC 33305 / BD413 / ADP1).